The primary structure comprises 406 residues: Putative F-box protein At5g38270 (406 aa).

Positions 20 to 67 (HDWSKLCPDILRSILESLSSTDFHRAKTVCSDWYSNWKTCVKPLCPWR) constitute an F-box domain.

In Arabidopsis thaliana (Mouse-ear cress), this protein is Putative F-box protein At5g38270.